A 297-amino-acid chain; its full sequence is Nuclear transcription factor Y subunit B-11 (297 aa).

A disordered region spans residues 1–25 (MKSRKSYGHLLSPVGSPPLDNESGE). The DNA-binding element occupies 63-69 (LPIANVS). Residues 90–101 (VQECVSEFISFV) are subunit association domain (SAD).

Belongs to the NFYB/HAP3 subunit family. In terms of assembly, heterotrimeric transcription factor composed of three components, NF-YA, NF-YB and NF-YC. NF-YB and NF-YC must interact and dimerize for NF-YA association and DNA binding. Interacts with NFYC2, NFYC4 and NFYC6. As to expression, expressed in roots, culms, nodes, leaf blades, leaf sheaths and young panicles.

The protein localises to the nucleus. It is found in the cytoplasm. Its function is as follows. Probable transcription factor involved in the regulation of flowering time under long day (LD) conditions. Functions as a repressor of flowering, independently of HD1 and GHD7. Controls flowering time by negatively regulating the expression of EHD1 and HD3A. Regulates plant height by promoting cell elongation in the internodes. Component of the NF-Y/HAP transcription factor complex. The sequence is that of Nuclear transcription factor Y subunit B-11 (HD5) from Oryza sativa subsp. japonica (Rice).